A 205-amino-acid chain; its full sequence is H/ACA ribonucleoprotein complex subunit GAR1 (205 aa).

Residues 1–23 (MSFRGGNRGGRGGFRGGFRGGRT) show a composition bias toward gly residues. The disordered stretch occupies residues 1 to 31 (MSFRGGNRGGRGGFRGGFRGGRTGSARSFQQ). Position 4 is an asymmetric dimethylarginine; by HMT1 (Arg4). Positions 4 to 21 (RGGNRGGRGGFRGGFRGG) are RGG-box 1. Position 8 is an asymmetric dimethylarginine; by HMT1; alternate (Arg8). Omega-N-methylarginine; by HMT1; alternate is present on Arg8. Arg11 carries the post-translational modification Asymmetric dimethylarginine; by HMT1. Residue Arg15 is modified to Asymmetric dimethylarginine; by HMT1; alternate. Arg15 is subject to Omega-N-methylarginine; by HMT1; alternate. Asymmetric dimethylarginine; by HMT1 is present on Arg19. Lys77 participates in a covalent cross-link: Glycyl lysine isopeptide (Lys-Gly) (interchain with G-Cter in ubiquitin). The disordered stretch occupies residues 124 to 205 (PKPKVVGPPK…SRGGFRGGRR (82 aa)). The segment covering 143–205 (APGGRGGASM…SRGGFRGGRR (63 aa)) has biased composition (gly residues). Asymmetric dimethylarginine; by HMT1; alternate is present on residues Arg147, Arg154, and Arg158. Omega-N-methylarginine; by HMT1; alternate is present on residues Arg147, Arg154, and Arg158. The RGG-box 2 stretch occupies residues 147–205 (RGGASMGRGGSRGGFRGGRGGSSFRGGRGGSSFRGGSRGGSFRGGSRGGSRGGFRGGRR). Position 162 is an asymmetric dimethylarginine; by HMT1 (Arg162). Arg165 is modified (asymmetric dimethylarginine; by HMT1; alternate). Arg165 carries the omega-N-methylarginine; by HMT1; alternate modification. Asymmetric dimethylarginine; by HMT1 is present on residues Arg171 and Arg174. Arg180 and Arg184 each carry omega-N-methylarginine; by HMT1. Arg189 bears the Asymmetric dimethylarginine; by HMT1; alternate mark. Arg189 carries the post-translational modification Omega-N-methylarginine; by HMT1; alternate. Residues Arg193, Arg197, and Arg201 each carry the asymmetric dimethylarginine; by HMT1 modification.

This sequence belongs to the GAR1 family. As to quaternary structure, component of the small nucleolar ribonucleoprotein particles containing H/ACA-type snoRNAs (H/ACA snoRNPs). The protein component of the H/ACA snoRNP contains CBF5, GAR1, NHP2 and NOP10. The complex contains a stable core composed of CBF5 and NOP10, to which GAR1 and NHP2 subsequently bind. Interacts with snoRNAs. Methylated by HMT1, forming asymmetric dimethylarginines (DMA) within a domain referred to as an RGG box, made up of repeated Gly-Gly dipeptides interspersed with Arg and aromatic residues.

The protein localises to the nucleus. It is found in the nucleolus. Functionally, non-catalytic component of the H/ACA small nucleolar ribonucleoprotein (H/ACA snoRNP), which catalyzes pseudouridylation of rRNA and is required for ribosome biogenesis. This involves the isomerization of uridine such that the ribose is subsequently attached to C5, instead of the normal N1. Pseudouridine ('psi') residues may serve to stabilize the conformation of rRNAs. The H/ACA snoRNP complex also mediates pseudouridylation of other types of RNAs. The H/ACA snoRNP complex mediates pseudouridylation at position 93 in U2 snRNA. Essential for growth. The protein is H/ACA ribonucleoprotein complex subunit GAR1 of Saccharomyces cerevisiae (strain ATCC 204508 / S288c) (Baker's yeast).